The primary structure comprises 202 residues: MIDNFKEIRLDFKDELKKITGKEVEFPKYTTQIINLANQNAQGTRPRVVGQMSDLIHECPDKSYEGWKKWYLEHYSDRIEKATKKISKMIENMKAAMELIDEEMIRKWVEDLVITKTAEGLIIQEIILKTIAEEAGLEWRLATSKEESKNIDGFIGSTPVSIKPMSYESMRPTVREEIDIQTIFYKKPKNSRYLYIYHNLNI.

It catalyses the reaction Endonucleolytic cleavage of DNA to give specific double-stranded fragments with terminal 5'-phosphates.. Its function is as follows. A P subtype restriction enzyme that recognizes the double-stranded sequence 5'-CTAG-3' and cleaves after C-1. The sequence is that of Type II restriction enzyme MthZI from Methanothermobacter thermautotrophicus (Methanobacterium thermoformicicum).